The following is a 273-amino-acid chain: NH(3)-dependent NAD(+) synthetase (273 aa).

47-54 serves as a coordination point for ATP; the sequence is GISGGQDS. Aspartate 53 provides a ligand contact to Mg(2+). Position 139 (arginine 139) interacts with deamido-NAD(+). Position 159 (threonine 159) interacts with ATP. Position 164 (glutamate 164) interacts with Mg(2+). Deamido-NAD(+) contacts are provided by lysine 172 and aspartate 179. Residues lysine 188 and threonine 210 each coordinate ATP. 259–260 contributes to the deamido-NAD(+) binding site; it reads HK.

The protein belongs to the NAD synthetase family. Homodimer.

It catalyses the reaction deamido-NAD(+) + NH4(+) + ATP = AMP + diphosphate + NAD(+) + H(+). Its pathway is cofactor biosynthesis; NAD(+) biosynthesis; NAD(+) from deamido-NAD(+) (ammonia route): step 1/1. Functionally, catalyzes the ATP-dependent amidation of deamido-NAD to form NAD. Uses ammonia as a nitrogen source. The sequence is that of NH(3)-dependent NAD(+) synthetase from Staphylococcus saprophyticus subsp. saprophyticus (strain ATCC 15305 / DSM 20229 / NCIMB 8711 / NCTC 7292 / S-41).